A 549-amino-acid polypeptide reads, in one-letter code: Cytoplasmic trehalase (549 aa).

Residues arginine 168, 175–176 (WD), asparagine 212, 221–223 (RSQ), 292–294 (RDE), and glycine 324 contribute to the substrate site. Residues aspartate 326 and glutamate 509 each act as proton donor/acceptor in the active site. Substrate is bound at residue glutamate 525.

It belongs to the glycosyl hydrolase 37 family. As to quaternary structure, monomer.

It localises to the cytoplasm. The catalysed reaction is alpha,alpha-trehalose + H2O = alpha-D-glucose + beta-D-glucose. It functions in the pathway glycan degradation; trehalose degradation; D-glucose from alpha,alpha-trehalose: step 1/1. Hydrolyzes trehalose to glucose. Could be involved, in cells returning to low osmolarity conditions, in the utilization of the accumulated cytoplasmic trehalose, which was synthesized in response to high osmolarity. This chain is Cytoplasmic trehalase, found in Escherichia coli O157:H7.